We begin with the raw amino-acid sequence, 673 residues long: Probable potassium transport system protein Kup 1 (673 aa).

The next 13 helical transmembrane spans lie at 14-34 (GAGFIIAMGIVYGDIGTSPLY), 58-78 (LSLIIWTLTLITTVKYVWIAL), 101-121 (WLIIPAMIGGAALLSDGALTP), 147-167 (LPIVIITLAILAILFLIQRFG), 175-195 (FGPVMFIWFSFFGITGLINLF), 196-216 (GDFSVLQAINPYWAIHLLLSP), 220-240 (AGIFVLGSVFLATTGAEALYS), 252-272 (VSWPFVKVCIILSYCGQAAWL), 294-314 (LIIFSVILATLAAIIASQALI), 345-365 (LYIPAVNLGLWLAASFIVVYF), 374-394 (AYGLAITVTMLMTTILLTVYL), 403-423 (VFVVLFFGAFIFIEGLFFAAS), and 427-447 (FLHGGYVVVILAALILFVMAI).

Belongs to the HAK/KUP transporter (TC 2.A.72) family.

The protein resides in the cell membrane. The catalysed reaction is K(+)(in) + H(+)(in) = K(+)(out) + H(+)(out). In terms of biological role, transport of potassium into the cell. Likely operates as a K(+):H(+) symporter. This Lactococcus lactis subsp. cremoris (strain SK11) protein is Probable potassium transport system protein Kup 1.